The sequence spans 76 residues: Large ribosomal subunit protein eL38 (76 aa).

The protein belongs to the eukaryotic ribosomal protein eL38 family.

The polypeptide is Large ribosomal subunit protein eL38 (RpL38) (Lysiphlebus testaceipes (Greenbugs aphid parastoid)).